Consider the following 159-residue polypeptide: Cyclic pyranopterin monophosphate synthase (159 aa).

Residues 75 to 77 (MCH) and 113 to 114 (ME) contribute to the substrate site. Aspartate 128 is a catalytic residue.

Belongs to the MoaC family. Homohexamer; trimer of dimers.

It carries out the reaction (8S)-3',8-cyclo-7,8-dihydroguanosine 5'-triphosphate = cyclic pyranopterin phosphate + diphosphate. Its pathway is cofactor biosynthesis; molybdopterin biosynthesis. Functionally, catalyzes the conversion of (8S)-3',8-cyclo-7,8-dihydroguanosine 5'-triphosphate to cyclic pyranopterin monophosphate (cPMP). In Desulfatibacillum aliphaticivorans, this protein is Cyclic pyranopterin monophosphate synthase.